Here is a 299-residue protein sequence, read N- to C-terminus: Nucleotide-binding protein Moth_0258 (299 aa).

14–21 (GLSGAGKT) is a binding site for ATP. 68-71 (DIRG) provides a ligand contact to GTP.

Belongs to the RapZ-like family.

Displays ATPase and GTPase activities. In Moorella thermoacetica (strain ATCC 39073 / JCM 9320), this protein is Nucleotide-binding protein Moth_0258.